The sequence spans 255 residues: tRNA (guanine-N(1)-)-methyltransferase (255 aa).

Residues G113 and 133–138 (IGDYVL) contribute to the S-adenosyl-L-methionine site.

Belongs to the RNA methyltransferase TrmD family. In terms of assembly, homodimer.

It localises to the cytoplasm. The enzyme catalyses guanosine(37) in tRNA + S-adenosyl-L-methionine = N(1)-methylguanosine(37) in tRNA + S-adenosyl-L-homocysteine + H(+). Its function is as follows. Specifically methylates guanosine-37 in various tRNAs. The polypeptide is tRNA (guanine-N(1)-)-methyltransferase (Klebsiella pneumoniae (strain 342)).